The primary structure comprises 269 residues: Shikimate dehydrogenase (NADP(+)) (269 aa).

Shikimate is bound by residues 14–16 (SKS) and Thr-61. The active-site Proton acceptor is the Lys-65. Position 77 (Glu-77) interacts with NADP(+). Shikimate is bound by residues Asn-86 and Asp-102. NADP(+) is bound by residues 126-130 (GAGGA), 149-154 (NRTLSK), and Met-213. Tyr-215 provides a ligand contact to shikimate. Gly-238 lines the NADP(+) pocket.

This sequence belongs to the shikimate dehydrogenase family. As to quaternary structure, homodimer.

The catalysed reaction is shikimate + NADP(+) = 3-dehydroshikimate + NADPH + H(+). Its pathway is metabolic intermediate biosynthesis; chorismate biosynthesis; chorismate from D-erythrose 4-phosphate and phosphoenolpyruvate: step 4/7. Involved in the biosynthesis of the chorismate, which leads to the biosynthesis of aromatic amino acids. Catalyzes the reversible NADPH linked reduction of 3-dehydroshikimate (DHSA) to yield shikimate (SA). This Pasteurella multocida (strain Pm70) protein is Shikimate dehydrogenase (NADP(+)).